We begin with the raw amino-acid sequence, 366 residues long: Putative ankyrin repeat protein RBE_0601 (366 aa).

ANK repeat units follow at residues 39–68 (KHGT…DINE), 94–124 (LPDE…DVNT), 131–160 (HGGA…IASQ), 162–186 (VISA…TAHD), 210–239 (KSSN…NPNA), and 250–280 (IALS…DTSK).

The chain is Putative ankyrin repeat protein RBE_0601 from Rickettsia bellii (strain RML369-C).